Here is a 65-residue protein sequence, read N- to C-terminus: Weak toxin CM-11 (65 aa).

Intrachain disulfides connect C3–C24, C6–C11, C17–C42, C46–C57, and C58–C63.

It belongs to the three-finger toxin family. Ancestral subfamily. Orphan group II sub-subfamily. Expressed by the venom gland.

The protein localises to the secreted. Binds with low affinity to muscular (alpha-1-beta-1-delta-epsilon/CHRNA1-CHRNB1-CHRND-CHRNE) and very low affinity to neuronal (alpha-7/CHRNA7) nicotinic acetylcholine receptor (nAChR). The protein is Weak toxin CM-11 of Naja haje haje (Egyptian cobra).